A 90-amino-acid polypeptide reads, in one-letter code: Protein RALF-like 29 (90 aa).

The N-terminal stretch at 1–25 (MIKTKEVTFVTILIVLCVFISTIHA) is a signal peptide. Intrachain disulfides connect cysteine 41-cysteine 50 and cysteine 63-cysteine 69.

It belongs to the plant rapid alkalinization factor (RALF) family.

It localises to the secreted. In terms of biological role, cell signaling peptide that may regulate plant stress, growth, and development. Mediates a rapid alkalinization of extracellular space by mediating a transient increase in the cytoplasmic Ca(2+) concentration leading to a calcium-dependent signaling events through a cell surface receptor and a concomitant activation of some intracellular mitogen-activated protein kinases. This Arabidopsis thaliana (Mouse-ear cress) protein is Protein RALF-like 29 (RALFL29).